We begin with the raw amino-acid sequence, 364 residues long: sn-glycerol-3-phosphate import ATP-binding protein UgpC (364 aa).

In terms of domain architecture, ABC transporter spans 4-235 (VVLRNVRKTY…PATTFVASFI (232 aa)). 37 to 44 (GPSGCGKS) is a binding site for ATP.

Belongs to the ABC transporter superfamily. sn-glycerol-3-phosphate importer (TC 3.A.1.1.3) family. In terms of assembly, the complex is composed of two ATP-binding proteins (UgpC), two transmembrane proteins (UgpA and UgpE) and a solute-binding protein (UgpB).

Its subcellular location is the cell inner membrane. It catalyses the reaction sn-glycerol 3-phosphate(out) + ATP + H2O = sn-glycerol 3-phosphate(in) + ADP + phosphate + H(+). Functionally, part of the ABC transporter complex UgpBAEC involved in sn-glycerol-3-phosphate (G3P) import. Responsible for energy coupling to the transport system. The polypeptide is sn-glycerol-3-phosphate import ATP-binding protein UgpC (Rhodopseudomonas palustris (strain HaA2)).